Here is a 553-residue protein sequence, read N- to C-terminus: Cytokine-like nuclear factor N-PAC (553 aa).

In terms of domain architecture, PWWP spans 8–66 (LGDLVWGKLGRYPPWPGKIVNPPKDLKKPRGKKCFFVKFFGTEDHAWIKVEQLKPYHAH). Basic and acidic residues-rich tracts occupy residues 92–145 (RAKG…EGKK) and 162–182 (RAQE…KDLS). Residues 92–190 (RAKGKDQTSS…LSIPESSTVK (99 aa)) are disordered. Serine 130 is subject to Phosphoserine. A Glycyl lysine isopeptide (Lys-Gly) (interchain with G-Cter in SUMO2) cross-link involves residue lysine 135. Phosphoserine is present on serine 167. A DNA-binding region (a.T hook) is located at residues 168 to 180 (PRKRGRPPKDEKD). Residues lysine 176, lysine 179, lysine 201, and lysine 211 each participate in a glycyl lysine isopeptide (Lys-Gly) (interchain with G-Cter in SUMO2) cross-link. The interaction with histone H3 stretch occupies residues 214 to 217 (DPHF). The tract at residues 216–225 (HFHHFLLSQT) is interaction with KDM1B. Glycyl lysine isopeptide (Lys-Gly) (interchain with G-Cter in SUMO2) cross-links involve residues lysine 227, lysine 237, lysine 240, and lysine 269. Positions 261 to 553 (GSVTPTDKKI…MSAVYRAYIH (293 aa)) are dehydrogenase domain. 271–285 (GFLGLGLMGSGIVSN) serves as a coordination point for NAD(+). Residue lysine 302 forms a Glycyl lysine isopeptide (Lys-Gly) (interchain with G-Cter in SUMO2) linkage. Residues threonine 362 and lysine 505 each coordinate NAD(+). Serine 540 carries the phosphoserine modification.

Belongs to the HIBADH-related family. NP60 subfamily. As to quaternary structure, homotetramere. Interacts with MAPK14. Interacts with KDM1B at nucleosomes; this interaction stimulates H3K4me1 and H3K4me2 demethylation. Binds to mononucleosomes. Interacts with GATA4; the interaction is required for a synergistic activation of GATA4 target genes transcription.

Its subcellular location is the nucleus. The protein resides in the chromosome. Its function is as follows. Cytokine-like nuclear factor with chromatin gene reader activity involved in chromatin modification and regulation of gene expression. Acts as a nucleosome-destabilizing factor that is recruited to genes during transcriptional activation. Recognizes and binds histone H3 without a preference for specific epigenetic markers and also binds DNA. Interacts with KDM1B and promotes its histone demethylase activity by facilitating the capture of H3 tails, they form a multifunctional enzyme complex that modifies transcribed chromatin and facilitates Pol II transcription through nucleosomes. Stimulates the acetylation of 'Lys-56' of nucleosomal histone H3 (H3K56ac) by EP300. With GATA4, co-binds a defined set of heart development genes and coregulates their expression during cardiomyocyte differentiation. Regulates p38 MAP kinase activity by mediating stress activation of MAPK14/p38alpha and specifically regulating MAPK14 signaling. Indirectly promotes phosphorylation of MAPK14 and activation of ATF2. The phosphorylation of MAPK14 requires upstream activity of MAP2K4 and MAP2K6. This is Cytokine-like nuclear factor N-PAC (GLYR1) from Bos taurus (Bovine).